A 413-amino-acid polypeptide reads, in one-letter code: Oxidoreductase vrtI (413 aa).

One can recognise a Fe2OG dioxygenase domain in the interval 235–341 (DAESLTTLSM…RYSIAYFLRA (107 aa)). Fe cation contacts are provided by His262, Asp264, and His319. Arg332 serves as a coordination point for 2-oxoglutarate.

This sequence belongs to the iron/ascorbate-dependent oxidoreductase family.

The protein operates within secondary metabolite biosynthesis; terpenoid biosynthesis. Its function is as follows. Oxidoreductase; part of the gene cluster that mediates the biosynthesis of viridicatumtoxin, a tetracycline-like fungal meroterpenoid with a unique, fused spirobicyclic ring system. The first step of the pathway is the production of the malonamoyl-CoA starter unit for the polyketide synthase vrtA. The aldolase vrtJ may be involved in the synthesis of the malonamate substrate for malonamoyl-CoA synthetase vrtB. The polyketide synthase vrtA then may utilize the malonamoyl-CoA starter unit, followed by sequential condensation of eight malonyl-CoA units to form the polyketide backbone. The cyclization of the last ring could be mediated by the lactamase-like protein vrtG. The proposed post-PKS tailoring steps are a hydroxylation at C5 catalyzed the cytochrome P450 monooxygenase vrtE, a hydroxylation at C12a catalyzed by VrtH and/or VrtI, and an O-methylation by the O-methyltransferase vrtF. VrtC is then proposed to catalyze the transfer of a geranyl group synthesized by vrtD to the aromatic C ring of the tetracyclic polyketide intermediate of viridicatumtoxin to yield previridicatumtoxin. Finally, the cytochrome P450 monooxygenase vrtK catalyzes the spirocyclization of the geranyl moiety of previridicatumtoxin to afford viridicatumtoxin. The polypeptide is Oxidoreductase vrtI (Penicillium aethiopicum).